Here is a 383-residue protein sequence, read N- to C-terminus: Na(+)/H(+) antiporter NhaA (383 aa).

11 consecutive transmembrane segments (helical) span residues 21–41, 56–76, 94–114, 123–143, 152–172, 175–195, 202–222, 258–278, 287–307, 326–346, and 355–375; these read AAGV…NSIW, LTMR…LAGL, LLPG…YVAF, GWAI…ALAG, VFLT…IALF, GTLS…LLML, TLFP…KSGI, FVIL…GVTV, LGVG…AVSI, IGIA…AILA, and QIKL…YILL.

This sequence belongs to the NhaA Na(+)/H(+) (TC 2.A.33) antiporter family.

The protein localises to the cell inner membrane. The catalysed reaction is Na(+)(in) + 2 H(+)(out) = Na(+)(out) + 2 H(+)(in). Its function is as follows. Na(+)/H(+) antiporter that extrudes sodium in exchange for external protons. The sequence is that of Na(+)/H(+) antiporter NhaA from Granulibacter bethesdensis (strain ATCC BAA-1260 / CGDNIH1).